The primary structure comprises 296 residues: Formamidopyrimidine-DNA glycosylase (296 aa).

Pro-2 serves as the catalytic Schiff-base intermediate with DNA. Glu-3 acts as the Proton donor in catalysis. The active-site Proton donor; for beta-elimination activity is Lys-58. Residues His-104, Arg-126, and Lys-169 each coordinate DNA. The FPG-type zinc finger occupies 260–296; it reads SVYDRAGEACRKPGCDGTVTRIVQAGRSTFHCPRCQK. Catalysis depends on Arg-286, which acts as the Proton donor; for delta-elimination activity.

Belongs to the FPG family. As to quaternary structure, monomer. The cofactor is Zn(2+).

It catalyses the reaction Hydrolysis of DNA containing ring-opened 7-methylguanine residues, releasing 2,6-diamino-4-hydroxy-5-(N-methyl)formamidopyrimidine.. The catalysed reaction is 2'-deoxyribonucleotide-(2'-deoxyribose 5'-phosphate)-2'-deoxyribonucleotide-DNA = a 3'-end 2'-deoxyribonucleotide-(2,3-dehydro-2,3-deoxyribose 5'-phosphate)-DNA + a 5'-end 5'-phospho-2'-deoxyribonucleoside-DNA + H(+). In terms of biological role, involved in base excision repair of DNA damaged by oxidation or by mutagenic agents. Acts as a DNA glycosylase that recognizes and removes damaged bases. Has a preference for oxidized purines, such as 7,8-dihydro-8-oxoguanine (8-oxoG). Has AP (apurinic/apyrimidinic) lyase activity and introduces nicks in the DNA strand. Cleaves the DNA backbone by beta-delta elimination to generate a single-strand break at the site of the removed base with both 3'- and 5'-phosphates. The chain is Formamidopyrimidine-DNA glycosylase from Sinorhizobium fredii (strain NBRC 101917 / NGR234).